The following is a 176-amino-acid chain: Glutamyl-tRNA(Gln) amidotransferase subunit F, mitochondrial (176 aa).

The protein belongs to the GatF family. In terms of assembly, subunit of the heterotrimeric GatFAB amidotransferase (AdT) complex, composed of A, B and F subunits.

Its subcellular location is the mitochondrion inner membrane. It carries out the reaction L-glutamyl-tRNA(Gln) + L-glutamine + ATP + H2O = L-glutaminyl-tRNA(Gln) + L-glutamate + ADP + phosphate + H(+). Its function is as follows. Allows the formation of correctly charged Gln-tRNA(Gln) through the transamidation of misacylated Glu-tRNA(Gln) in the mitochondria. The reaction takes place in the presence of glutamine and ATP through an activated gamma-phospho-Glu-tRNA(Gln). Required for proper protein synthesis within the mitochondrion. This Yarrowia lipolytica (strain CLIB 122 / E 150) (Yeast) protein is Glutamyl-tRNA(Gln) amidotransferase subunit F, mitochondrial.